The sequence spans 501 residues: 2-isopropylmalate synthase (501 aa).

Residues 7 to 269 (VRIFDTTLRD…QTQIKTEEIA (263 aa)) enclose the Pyruvate carboxyltransferase domain. 4 residues coordinate Mn(2+): Asp-16, His-204, His-206, and Asn-240. Residues 394–501 (QLEGFTVSTG…RAYISALNRL (108 aa)) form a regulatory domain region.

It belongs to the alpha-IPM synthase/homocitrate synthase family. LeuA type 1 subfamily. Homodimer. Mn(2+) serves as cofactor.

It is found in the cytoplasm. It catalyses the reaction 3-methyl-2-oxobutanoate + acetyl-CoA + H2O = (2S)-2-isopropylmalate + CoA + H(+). Its pathway is amino-acid biosynthesis; L-leucine biosynthesis; L-leucine from 3-methyl-2-oxobutanoate: step 1/4. Catalyzes the condensation of the acetyl group of acetyl-CoA with 3-methyl-2-oxobutanoate (2-ketoisovalerate) to form 3-carboxy-3-hydroxy-4-methylpentanoate (2-isopropylmalate). The sequence is that of 2-isopropylmalate synthase from Leptospira interrogans serogroup Icterohaemorrhagiae serovar copenhageni (strain Fiocruz L1-130).